A 155-amino-acid polypeptide reads, in one-letter code: Probable tellurium resistance transcriptional regulator TerW (155 aa).

In terms of biological role, involved in tellurite resistance. TerW binds specifically to the potential promoter region of the terZABCDE operon and probably regulates expression of the genes. This is Probable tellurium resistance transcriptional regulator TerW from Escherichia coli.